Consider the following 95-residue polypeptide: Putative septation protein SpoVG (95 aa).

The protein belongs to the SpoVG family.

In terms of biological role, could be involved in septation. In Clostridium botulinum (strain ATCC 19397 / Type A), this protein is Putative septation protein SpoVG.